The chain runs to 767 residues: 5-methyltetrahydropteroyltriglutamate--homocysteine methyltransferase (767 aa).

5-methyltetrahydropteroyltri-L-glutamate-binding positions include 17–20 (RELK) and Lys-117. Residues 441-443 (IGS) and Glu-494 each bind L-homocysteine. L-methionine is bound by residues 441 to 443 (IGS) and Glu-494. 5-methyltetrahydropteroyltri-L-glutamate contacts are provided by residues 525-526 (RC) and Trp-571. Asp-609 contributes to the L-homocysteine binding site. Asp-609 provides a ligand contact to L-methionine. Glu-615 contacts 5-methyltetrahydropteroyltri-L-glutamate. 3 residues coordinate Zn(2+): His-652, Cys-654, and Glu-676. His-705 serves as the catalytic Proton donor. Residue Cys-737 coordinates Zn(2+).

This sequence belongs to the vitamin-B12 independent methionine synthase family. Zn(2+) is required as a cofactor.

The enzyme catalyses 5-methyltetrahydropteroyltri-L-glutamate + L-homocysteine = tetrahydropteroyltri-L-glutamate + L-methionine. It functions in the pathway amino-acid biosynthesis; L-methionine biosynthesis via de novo pathway; L-methionine from L-homocysteine (MetE route): step 1/1. Functionally, catalyzes the transfer of a methyl group from 5-methyltetrahydrofolate to homocysteine resulting in methionine formation. The polypeptide is 5-methyltetrahydropteroyltriglutamate--homocysteine methyltransferase (Bifidobacterium longum subsp. infantis (strain ATCC 15697 / DSM 20088 / JCM 1222 / NCTC 11817 / S12)).